Here is a 196-residue protein sequence, read N- to C-terminus: MPIGVPKVPYRSPGDKHPSWVDIYNRLYRERLLFLGQMVESDISNQLIGIMVYLSIENETKDLYLFINSPGGWVIPGIAIYDTMQFVRPDVQTICMGLAASMGSFLLAAGASTKRLAFPHARVMIHQPIGAFYGAQTGEFILDTEELLRLREILTMVYVQRSGKPLWVVSEDMERDTFMSATEAQAHGLVDLVAVG.

The Nucleophile role is filled by S101. Residue H126 is part of the active site.

The protein belongs to the peptidase S14 family. Component of the chloroplastic Clp protease core complex.

It is found in the plastid. The protein resides in the chloroplast stroma. The catalysed reaction is Hydrolysis of proteins to small peptides in the presence of ATP and magnesium. alpha-casein is the usual test substrate. In the absence of ATP, only oligopeptides shorter than five residues are hydrolyzed (such as succinyl-Leu-Tyr-|-NHMec, and Leu-Tyr-Leu-|-Tyr-Trp, in which cleavage of the -Tyr-|-Leu- and -Tyr-|-Trp bonds also occurs).. Functionally, cleaves peptides in various proteins in a process that requires ATP hydrolysis. Has a chymotrypsin-like activity. Plays a major role in the degradation of misfolded proteins. The polypeptide is ATP-dependent Clp protease proteolytic subunit (Citrus sinensis (Sweet orange)).